We begin with the raw amino-acid sequence, 237 residues long: Class B acid phosphatase (237 aa).

The signal sequence occupies residues 1–23 (MKKITLALSAVCLLFTLNHSANA). Catalysis depends on aspartate 69, which acts as the Nucleophile. Residues aspartate 69 and aspartate 71 each contribute to the Mg(2+) site. The active-site Proton donor is aspartate 71. Residues 137 to 138 (TG) and lysine 177 each bind substrate. Aspartate 192 lines the Mg(2+) pocket.

It belongs to the class B bacterial acid phosphatase family. As to quaternary structure, homotetramer. Mg(2+) serves as cofactor.

Its subcellular location is the periplasm. The enzyme catalyses a phosphate monoester + H2O = an alcohol + phosphate. Dephosphorylates several organic phosphate monoesters. Also has a phosphotransferase activity catalyzing the transfer of low-energy phosphate groups from organic phosphate monoesters to free hydroxyl groups of various organic compounds. The polypeptide is Class B acid phosphatase (Salmonella arizonae (strain ATCC BAA-731 / CDC346-86 / RSK2980)).